The sequence spans 118 residues: Beta-defensin 126 (118 aa).

The N-terminal stretch at 1–20 (MKSLLFTLAVFMLLAQLVSG) is a signal peptide. An in vitro binds to LPS, mediates antimicrobial activity and inhibits LPS-mediated inflammation region spans residues 21–63 (SWYVKKCLNDVGICKKKCKPEELHVKNGWAMCGKQRDCCVPAD). Disulfide bonds link Cys27-Cys58, Cys34-Cys52, and Cys38-Cys59.

The protein belongs to the beta-defensin family. As to quaternary structure, homodimer or homooligomer; disulfide-linked. O-glycosylated; glycans contain alpha(2,3)-linked sialic acids.

It localises to the secreted. Functionally, highly glycosylated atypical beta-defensin involved in several aspects of sperm function. Facilitates sperm transport in the female reproductive tract and contributes to sperm protection against immunodetection; both functions are probably implicating the negative surface charge provided by its O-linked oligosaccharides in the sperm glycocalyx. Involved in binding of sperm to oviductal epithelial cells to form a sperm reservoir until ovulation. Release from the sperm surface during capacitation and ovaluation by an elevation of oviductal fluid pH is unmasking other surface components and allows sperm to penetrate the cumulus matrix and bind to the zona pellucida of the oocyte. In vitro has antimicrobial activity and may inhibit LPS-mediated inflammation. This chain is Beta-defensin 126 (DEFB126), found in Pongo pygmaeus (Bornean orangutan).